Reading from the N-terminus, the 345-residue chain is Anthranilate phosphoribosyltransferase (345 aa).

Residues Gly84, 87 to 88 (GD), Thr92, 94 to 97 (NIST), 112 to 120 (KHGGRSVSS), and Ser124 contribute to the 5-phospho-alpha-D-ribose 1-diphosphate site. Gly84 lines the anthranilate pocket. Ser96 serves as a coordination point for Mg(2+). Arg170 provides a ligand contact to anthranilate. Residues Asp229 and Glu230 each coordinate Mg(2+).

It belongs to the anthranilate phosphoribosyltransferase family. In terms of assembly, homodimer. Requires Mg(2+) as cofactor.

The enzyme catalyses N-(5-phospho-beta-D-ribosyl)anthranilate + diphosphate = 5-phospho-alpha-D-ribose 1-diphosphate + anthranilate. It functions in the pathway amino-acid biosynthesis; L-tryptophan biosynthesis; L-tryptophan from chorismate: step 2/5. Its function is as follows. Catalyzes the transfer of the phosphoribosyl group of 5-phosphorylribose-1-pyrophosphate (PRPP) to anthranilate to yield N-(5'-phosphoribosyl)-anthranilate (PRA). The polypeptide is Anthranilate phosphoribosyltransferase (Herminiimonas arsenicoxydans).